Reading from the N-terminus, the 32-residue chain is Ribulose bisphosphate carboxylase/oxygenase activase, chloroplastic (32 aa).

Residues 13–32 are disordered; the sequence is FGALREGPPTFEQPAMTIEK.

Belongs to the RuBisCO activase family.

The protein resides in the plastid. It is found in the chloroplast stroma. In terms of biological role, activation of RuBisCO (ribulose-1,5-bisphosphate carboxylase/oxygenase; EC 4.1.1.39) involves the ATP-dependent carboxylation of the epsilon-amino group of lysine leading to a carbamate structure. The sequence is that of Ribulose bisphosphate carboxylase/oxygenase activase, chloroplastic from Populus euphratica (Euphrates poplar).